The primary structure comprises 355 residues: Probable NADPH-dependent quinone reductase tdiC (355 aa).

Belongs to the zinc-containing alcohol dehydrogenase family. NADPH is required as a cofactor.

Its pathway is secondary metabolite biosynthesis. Functionally, probable NADPH-dependent quinone reductase; part of the gene cluster that mediates the biosynthesis of terrequinone A, an antitumor agent. The first step in the biosynthetic pathway for terrequinone A is formation of indole pyruvic acid (IPA) from L-tryptophan by the aminotransferase tdiD. The nonribosomal peptide synthase tdiA then immediately converts unstable IPA to didemethylasterriquinone D (DDAQ D), via condensation of 2 IPA molecules. The symmetric connectivity of the 2 IPA molecules is thought to arise by head-to-tail dual Claisen condensations facilitated by the TE domain. TdiB then catalyzes reverse prenylation by transferring dimethylallyl diphosphate to carbon atom 2' of DDAQ D, to yield asterriquinone C-1. Finally, tdiC and tdiE enzymes robustly convert asterriquinone C-1 to terrequinone A via a transformation involving regular prenylation at carbon atom 5, which requires elimination of the hydroxy group on C-5. This is Probable NADPH-dependent quinone reductase tdiC from Emericella nidulans (strain FGSC A4 / ATCC 38163 / CBS 112.46 / NRRL 194 / M139) (Aspergillus nidulans).